A 489-amino-acid polypeptide reads, in one-letter code: Glycogen synthase (489 aa).

Residue Lys18 participates in ADP-alpha-D-glucose binding.

This sequence belongs to the glycosyltransferase 1 family. Bacterial/plant glycogen synthase subfamily.

The enzyme catalyses [(1-&gt;4)-alpha-D-glucosyl](n) + ADP-alpha-D-glucose = [(1-&gt;4)-alpha-D-glucosyl](n+1) + ADP + H(+). It participates in glycan biosynthesis; glycogen biosynthesis. Functionally, synthesizes alpha-1,4-glucan chains using ADP-glucose. The sequence is that of Glycogen synthase from Rhodopseudomonas palustris (strain BisB18).